The following is a 756-amino-acid chain: Probable chemoreceptor y4sI (756 aa).

2 consecutive transmembrane segments (helical) span residues 26–46 (VCVA…TSVA) and 330–350 (LIKI…MAIL). 2 HAMP domains span residues 353-406 (RSIS…ARVA) and 434-486 (DEQA…ETIR). The region spanning 491 to 720 (QAASMSSIVS…ESDAACRSLN (230 aa)) is the Methyl-accepting transducer domain. Positions 736-756 (GGGSSTRQPQSPPTQRYFMSR) are disordered.

It belongs to the methyl-accepting chemotaxis (MCP) protein family.

It is found in the cell membrane. Its function is as follows. Chemotactic-signal transducers respond to changes in the concentration of attractants and repellents in the environment, transduce a signal from the outside to the inside of the cell, and facilitate sensory adaptation through the variation of the level of methylation. Attractants increase the level of methylation while repellents decrease the level of methylation. The protein is Probable chemoreceptor y4sI of Sinorhizobium fredii (strain NBRC 101917 / NGR234).